Here is a 436-residue protein sequence, read N- to C-terminus: MYHPRELYPSLGAGYRLGPAQPGADSSFPPALAEGYRYPELDTPKLDCFLSGMEAAPRTLAAHPPLPLLPPAMGTEPAPSAPEALHSLPGVSLSLENRELWKEFSSVGTEMIITKAGRRMFPACRVSVTGLDPEARYLFLLDVIPVDGARYRWQGRCWEPSGKAEPRLPDRVYIHPDSPATGAHWMRQPVSFHRVKLTNSTLDPHGHLILHSMHKYQPRIHLVRAAQLCSQHWGGMASFRFPETTFISVTAYQNPRITQLKIAANPFAKGFRENGRNCKRERDARVKRKLRGPEPAATEACGSGDTPGGPCDSTLGGDIRESDPEQAPAPGEATAAPAPLCGGPSAEAYLLHPAAFHGAPSHLPTRSPSFPEAPDSGRSAPYSAAFLELPHGSGGSGYPAAPPAVPFAPHFLQGGPFPLPYTAPGGYLDVGSKPMY.

The segment at residues 100–273 is a DNA-binding region (T-box); sequence LWKEFSSVGT…ANPFAKGFRE (174 aa). Basic and acidic residues predominate over residues 274–284; it reads NGRNCKRERDA. Disordered stretches follow at residues 274–339 and 360–379; these read NGRN…APAP and PSHL…SGRS. Residues 325 to 339 are compositionally biased toward low complexity; the sequence is EQAPAPGEATAAPAP.

In terms of assembly, forms a dimeric complex with DNA (in vitro).

It localises to the nucleus. Its function is as follows. T-box transcription factor that plays an essential role in the determination of the fate of axial stem cells: neural vs mesodermal. Acts in part by down-regulating, a specific enhancer (N1) of SOX2, to inhibit neural development. Seems to play also an essential role in left/right axis determination and acts through effects on Notch signaling around the node as well as through an effect on the morphology and motility of the nodal cilia. In Gorilla gorilla gorilla (Western lowland gorilla), this protein is T-box transcription factor TBX6 (TBX6).